The chain runs to 87 residues: Neutrophil antibiotic peptide NP-3B (87 aa).

The N-terminal stretch at 1–19 (MRTLILLTTLLLLALHTQA) is a signal peptide. The propeptide occupies 20-58 (ESPQGSTKEAPDEEQDISVFFGGDKGTALQDAAVKAGVT). 3 disulfide bridges follow: C59/C87, C61/C76, and C66/C86.

The protein belongs to the alpha-defensin family.

It is found in the secreted. Active in vitro against S.aureus, fungi, Gram-positive and Gram-negative bacteria and to a lesser extent against an enveloped virus. This is Neutrophil antibiotic peptide NP-3B from Rattus norvegicus (Rat).